Reading from the N-terminus, the 390-residue chain is Putative nickel insertion protein (390 aa).

The protein belongs to the LarC family.

In Geotalea uraniireducens (strain Rf4) (Geobacter uraniireducens), this protein is Putative nickel insertion protein.